Here is a 205-residue protein sequence, read N- to C-terminus: MNSNSFLISAALIFSLLSSNSPTSILAQINTPCSPSMLSSVTGCTSFLTGGGSFPTSDCCGALKSLTGTGMDCLCLIVTAGVPISIPINRTLAISLPRACGIPGVPVQCKASAAPLPTPGPASFGPTTSPTDSQTSDPEGSASFRPPTSPTTSQTPNDKDLSGSGNGGDPMGFAPPPPSSSPSSSHSLKLSYLLFAFAFTIIKFI.

An N-terminal signal peptide occupies residues 1–27 (MNSNSFLISAALIFSLLSSNSPTSILA). Disulfide bonds link C33–C75, C44–C59, C60–C100, and C73–C109. Residue N89 is glycosylated (N-linked (GlcNAc...) asparagine). Positions 116–182 (LPTPGPASFG…FAPPPPSSSP (67 aa)) are disordered. Residues 126–156 (PTTSPTDSQTSDPEGSASFRPPTSPTTSQTP) are compositionally biased toward low complexity. A lipid anchor (GPI-anchor amidated serine) is attached at S179. Residues 180 to 205 (SSPSSSHSLKLSYLLFAFAFTIIKFI) constitute a propeptide, removed in mature form.

It belongs to the plant LTP family.

The protein localises to the cell membrane. Its function is as follows. Probable lipid transfer protein. The protein is Non-specific lipid transfer protein GPI-anchored 21 of Arabidopsis thaliana (Mouse-ear cress).